We begin with the raw amino-acid sequence, 488 residues long: MNTQQLAKLRSIVPEMRRVRHIHFVGIGGAGMGGIAEVLANEGYQISGSDLAPNAVTQQLTALGATIYFNHRPENVLDASVVVVSSAISADNPEIVAAHEARIPVIRRAEMLAELMRFRHGIAVAGTHGKTTTTAMVSSIYAEAGLDPTFVNGGLVKAAGTHARLGNSRYLIAEADESDASFLHLQPMVAIVTNIEADHMDTYHGDFENLKQTFINFLHNLPFYGRAVMCVDDPVIRELLPRVGRQITTYGFSEDADVRVENYRQTGAQGHFTLVRQDKPELHVTLNAPGRHNALNAAAAVSVATEEGIEDDAILRALESFQGTGRRFDFLGEFPLANVNGKSGTAMLVDDYGHHPTEVDATVRAARAGWPEKNLVMIFQPHRYTRTRDLYDDFANVLSQVDVLLMLDVYPAGEAPIPGADSRSLCRTIRARGKVDPILVSDPAQVAAMLAPVLSGNDLILVQGAGNIGKIARQLAEAKLQPEENAHG.

126 to 132 provides a ligand contact to ATP; it reads GTHGKTT.

It belongs to the MurCDEF family.

Its subcellular location is the cytoplasm. The catalysed reaction is UDP-N-acetyl-alpha-D-muramate + L-alanine + ATP = UDP-N-acetyl-alpha-D-muramoyl-L-alanine + ADP + phosphate + H(+). It functions in the pathway cell wall biogenesis; peptidoglycan biosynthesis. In terms of biological role, cell wall formation. This chain is UDP-N-acetylmuramate--L-alanine ligase, found in Cronobacter sakazakii (strain ATCC BAA-894) (Enterobacter sakazakii).